A 153-amino-acid polypeptide reads, in one-letter code: Putative ATP synthase subunit f, mitochondrial (153 aa).

It belongs to the ATPase F chain family. In terms of assembly, subunit of the F-type ATPase which has 2 components, CF(1) - the catalytic core - and CF(0) - the membrane proton channel.

It localises to the mitochondrion membrane. Functionally, mitochondrial membrane ATP synthase (F(1)F(0) ATP synthase or Complex V) produces ATP from ADP in the presence of a proton gradient across the membrane which is generated by electron transport complexes of the respiratory chain. F-type ATPases consist of two structural domains, F(1) - containing the extramembraneous catalytic core and F(0) - containing the membrane proton channel, linked together by a central stalk and a peripheral stalk. During catalysis, ATP synthesis in the catalytic domain of F(1) is coupled via a rotary mechanism of the central stalk subunits to proton translocation. Part of the complex F(0) domain. Minor subunit located with subunit a in the membrane. In Caenorhabditis elegans, this protein is Putative ATP synthase subunit f, mitochondrial.